Consider the following 344-residue polypeptide: rRNA 2'-O-methyltransferase fibrillarin (344 aa).

A disordered region spans residues 1-113; the sequence is MGKPGFSPRG…GFKGGKTVTI (113 aa). Residues 8-107 show a composition bias toward gly residues; sequence PRGGGGGGGG…RGGGAGGFKG (100 aa). Residues R9, R23, R25, R40, R42, R48, R51, R58, R63, R71, R77, R83, R88, R93, and R98 each carry the asymmetric dimethylarginine modification. S-adenosyl-L-methionine contacts are provided by residues 197–198, 216–217, 241–242, and 261–264; these read TT, EF, DA, and DVAQ.

It belongs to the methyltransferase superfamily. Fibrillarin family. In terms of assembly, component of box C/D small nucleolar ribonucleoprotein (snoRNP) particles. It is associated with the U3, U8 and U13 small nuclear RNAs. Post-translationally, by homology to other fibrillarins, some or all of the N-terminal domain arginines are modified to asymmetric dimethylarginine (DMA).

The protein resides in the nucleus. It localises to the nucleolus. It catalyses the reaction L-glutaminyl-[histone H2A] + S-adenosyl-L-methionine = N(5)-methyl-L-glutaminyl-[histone H2A] + S-adenosyl-L-homocysteine + H(+). In terms of biological role, S-adenosyl-L-methionine-dependent methyltransferase that has the ability to methylate both RNAs and proteins. Involved in pre-rRNA processing. Utilizes the methyl donor S-adenosyl-L-methionine to catalyze the site-specific 2'-hydroxyl methylation of ribose moieties in pre-ribosomal RNA. Site specificity is provided by a guide RNA that base pairs with the substrate. Methylation occurs at a characteristic distance from the sequence involved in base pairing with the guide RNA. Also acts as a protein methyltransferase by mediating methylation of 'Gln-105' of histone H2A (H2AQ105me), a modification that impairs binding of the FACT complex and is specifically present at 35S ribosomal DNA locus. The protein is rRNA 2'-O-methyltransferase fibrillarin of Drosophila melanogaster (Fruit fly).